The chain runs to 52 residues: Large ribosomal subunit protein bL32c (52 aa).

The protein belongs to the bacterial ribosomal protein bL32 family.

It is found in the plastid. The protein resides in the chloroplast. The chain is Large ribosomal subunit protein bL32c from Morus indica (Mulberry).